Reading from the N-terminus, the 431-residue chain is Adenylosuccinate synthetase (431 aa).

GTP contacts are provided by residues 12–18 (GDEGKGK) and 40–42 (GHT). The Proton acceptor role is filled by Asp-13. Mg(2+) is bound by residues Asp-13 and Gly-40. IMP-binding positions include 13–16 (DEGK), 38–41 (NAGH), Thr-131, Arg-145, Gln-225, Thr-240, and Arg-304. Residue His-41 is the Proton donor of the active site. A substrate-binding site is contributed by 300-306 (VNTGRRR). Residues Arg-306, 332-334 (KLD), and 414-416 (STS) contribute to the GTP site.

It belongs to the adenylosuccinate synthetase family. As to quaternary structure, homodimer. Requires Mg(2+) as cofactor.

Its subcellular location is the cytoplasm. The enzyme catalyses IMP + L-aspartate + GTP = N(6)-(1,2-dicarboxyethyl)-AMP + GDP + phosphate + 2 H(+). Its pathway is purine metabolism; AMP biosynthesis via de novo pathway; AMP from IMP: step 1/2. Functionally, plays an important role in the de novo pathway of purine nucleotide biosynthesis. Catalyzes the first committed step in the biosynthesis of AMP from IMP. This is Adenylosuccinate synthetase from Beijerinckia indica subsp. indica (strain ATCC 9039 / DSM 1715 / NCIMB 8712).